The sequence spans 235 residues: 2,3-bisphosphoglycerate-dependent phosphoglycerate mutase (235 aa).

Substrate contacts are provided by residues 8-15 (RHGESIWN), 21-22 (TG), Arg58, 110-113 (ERYY), Lys121, 137-138 (RR), and 181-182 (GN). The active-site Tele-phosphohistidine intermediate is His9. The active-site Proton donor/acceptor is the Glu110.

This sequence belongs to the phosphoglycerate mutase family. BPG-dependent PGAM subfamily.

The enzyme catalyses (2R)-2-phosphoglycerate = (2R)-3-phosphoglycerate. It functions in the pathway carbohydrate degradation; glycolysis; pyruvate from D-glyceraldehyde 3-phosphate: step 3/5. Functionally, catalyzes the interconversion of 2-phosphoglycerate and 3-phosphoglycerate. The chain is 2,3-bisphosphoglycerate-dependent phosphoglycerate mutase from Methanococcus vannielii (strain ATCC 35089 / DSM 1224 / JCM 13029 / OCM 148 / SB).